A 356-amino-acid polypeptide reads, in one-letter code: Peptide chain release factor 1 (356 aa).

Gln232 bears the N5-methylglutamine mark. The disordered stretch occupies residues 281 to 301; that stretch reads ERQSSELSADRKAQVGSGDRS.

This sequence belongs to the prokaryotic/mitochondrial release factor family. Methylated by PrmC. Methylation increases the termination efficiency of RF1.

Its subcellular location is the cytoplasm. Functionally, peptide chain release factor 1 directs the termination of translation in response to the peptide chain termination codons UAG and UAA. The chain is Peptide chain release factor 1 from Desulfovibrio desulfuricans (strain ATCC 27774 / DSM 6949 / MB).